Consider the following 253-residue polypeptide: Major prion protein (253 aa).

The first 22 residues, 1–22 (MANLGCWMLVLFVATWSDLGLC), serve as a signal peptide directing secretion. The tract at residues 23–230 (KKRPKPGGWN…ESQAYYQRGS (208 aa)) is interaction with GRB2, ERI3 and SYN1. The segment at 26-108 (PKPGGWNTGG…WNKPSKPKTS (83 aa)) is disordered. 5 consecutive repeat copies span residues 51-59 (PQGGGGWGQ), 60-67 (PHGGGWGQ), 68-75 (PHGGGWGQ), 76-83 (PHGGGWGQ), and 84-91 (PHGGGWGQ). Residues 51-91 (PQGGGGWGQPHGGGWGQPHGGGWGQPHGGGWGQPHGGGWGQ) form a 5 X 8 AA tandem repeats of P-H-G-G-G-W-G-Q region. A compositionally biased stretch (gly residues) spans 52–95 (QGGGGWGQPHGGGWGQPHGGGWGQPHGGGWGQPHGGGWGQGGGT). Cu(2+) is bound by residues histidine 61, glycine 62, glycine 63, histidine 69, glycine 70, glycine 71, histidine 77, glycine 78, glycine 79, histidine 85, glycine 86, and glycine 87. Cysteine 179 and cysteine 214 form a disulfide bridge. 2 N-linked (GlcNAc...) asparagine glycosylation sites follow: asparagine 181 and asparagine 197. Residue serine 230 is the site of GPI-anchor amidated serine attachment. The propeptide at 231–253 (SMVFFSSPPVILLISFLIFLIVG) is removed in mature form.

This sequence belongs to the prion family. In terms of assembly, monomer and homodimer. Has a tendency to aggregate into amyloid fibrils containing a cross-beta spine, formed by a steric zipper of superposed beta-strands. Soluble oligomers may represent an intermediate stage on the path to fibril formation. Copper binding may promote oligomerization. Interacts with GRB2, APP, ERI3/PRNPIP and SYN1. Mislocalized cytosolically exposed PrP interacts with MGRN1; this interaction alters MGRN1 subcellular location and causes lysosomal enlargement. Interacts with KIAA1191.

It localises to the cell membrane. Its subcellular location is the golgi apparatus. Its function is as follows. Its primary physiological function is unclear. Has cytoprotective activity against internal or environmental stresses. May play a role in neuronal development and synaptic plasticity. May be required for neuronal myelin sheath maintenance. May play a role in iron uptake and iron homeostasis. Soluble oligomers are toxic to cultured neuroblastoma cells and induce apoptosis (in vitro). Association with GPC1 (via its heparan sulfate chains) targets PRNP to lipid rafts. Also provides Cu(2+) or Zn(2+) for the ascorbate-mediated GPC1 deaminase degradation of its heparan sulfate side chains. The chain is Major prion protein (PRNP) from Trachypithecus francoisi (Francois' leaf monkey).